The sequence spans 160 residues: Nucleotide-binding protein AHA_1129 (160 aa).

It belongs to the YajQ family.

Nucleotide-binding protein. The sequence is that of Nucleotide-binding protein AHA_1129 from Aeromonas hydrophila subsp. hydrophila (strain ATCC 7966 / DSM 30187 / BCRC 13018 / CCUG 14551 / JCM 1027 / KCTC 2358 / NCIMB 9240 / NCTC 8049).